Reading from the N-terminus, the 313-residue chain is Protein sprouty homolog 1 (313 aa).

Met-1 carries the N-acetylmethionine modification. The disordered stretch occupies residues 43-152 (QIKAIRGSNE…RSDRVIRTQP (110 aa)). A compositionally biased stretch (basic and acidic residues) spans 69-79 (PRPEKQERTHE). Positions 106-125 (SRSTSTGSAASSGSSSSVSS) are enriched in low complexity. The SPR domain occupies 177 to 289 (QCGKCKCGEC…CYDWTHRPGC (113 aa)).

The protein belongs to the sprouty family. Forms heterodimers with SPRY2. Interacts with TESK1. Interacts with CAV1 (via C-terminus).

Its subcellular location is the cytoplasm. It is found in the membrane. In terms of biological role, inhibits fibroblast growth factor (FGF)-induced retinal lens fiber differentiation, probably by inhibiting FGF-mediated phosphorylation of ERK1/2. Inhibits TGFB-induced epithelial-to-mesenchymal transition in lens epithelial cells. In Mus musculus (Mouse), this protein is Protein sprouty homolog 1 (Spry1).